The primary structure comprises 416 residues: Casein kinase I isoform epsilon (416 aa).

The Protein kinase domain maps to 9 to 277 (YRLGRKIGSG…YLRQLFRNLF (269 aa)). Residues 15–23 (IGSGSFGDI) and lysine 38 each bind ATP. Residue aspartate 128 is the Proton acceptor of the active site. Over residues 301–318 (PEDMDRERREHEREERMG) the composition is skewed to basic and acidic residues. The interval 301 to 416 (PEDMDRERRE…TSVPFDHLGK (116 aa)) is disordered. The segment covering 324-338 (ATRALPPGPPAGATG) has biased composition (low complexity). Polar residues-rich tracts occupy residues 350–365 (STPT…TSPR) and 400–409 (SRISASQTSV).

This sequence belongs to the protein kinase superfamily. CK1 Ser/Thr protein kinase family. Casein kinase I subfamily. In terms of assembly, monomer. Component of the circadian core oscillator, which includes the CRY proteins, CLOCK, or NPAS2, BMAL1 or BMAL2, CSNK1E, and the PER proteins.

The protein resides in the cytoplasm. It catalyses the reaction L-seryl-[protein] + ATP = O-phospho-L-seryl-[protein] + ADP + H(+). It carries out the reaction L-threonyl-[protein] + ATP = O-phospho-L-threonyl-[protein] + ADP + H(+). Its function is as follows. Casein kinases are operationally defined by their preferential utilization of acidic proteins such as caseins as substrates. Can phosphorylate a large number of proteins. Participates in Wnt signaling. Phosphorylates DVL1. Central component of the circadian clock. May act as a negative regulator of circadian rhythmicity by phosphorylating PER1 and PER2. Retains PER1 in the cytoplasm. The protein is Casein kinase I isoform epsilon (CSNK1E) of Gallus gallus (Chicken).